A 950-amino-acid chain; its full sequence is Serine/threonine-protein phosphatase 4 regulatory subunit 1 (950 aa).

HEAT repeat units follow at residues 1 to 25 (MADLSLLQEDLQEDADGFGVDDYSS), 26 to 63 (ESDVIIIPSALDFVSQDEMLTPLGRLDKYAASENIFNR), 65 to 81 (MVARSLLDTLREVCDDE), 82 to 119 (RDCIAVLERISRLADDSEPTVRAELMEQVPHIALFCQE), 127 to 164 (AFSKFLLPIVVRYLADQNNQVRKTSQAALLALLEQELI), 168 to 206 (DVETKVCPVLIELTAPDSNDDVKTEAVAIMCKMAPMVGK), 208 to 246 (ITERLILPRFCEMCCDCRMFHVRKVCAANFGDICSVVGQ), 248 to 285 (ATEEMLLPRFFQLCSDNVWGVRKACAECFMAVSCATCQ), and 287 to 324 (IRRTKLSALFINLISDPSRWVRQAAFQSLGPFISTFAN). Disordered stretches follow at residues 326–374 (SSSG…SVSN), 413–438 (ESHQEAASNENDKKPGNYKSMLRPEV), and 473–499 (EQNSGGKPSPEGPEEESEGPVPSSPNI). Basic and acidic residues predominate over residues 332-365 (FKEESKSSEEMSVENKNRTRDQEAPEDVQVRPED). 5 HEAT repeats span residues 505 to 542 (KELEEMIENLEPHIDDPDVKAQVEVLSAALRASSLDAH), 568 to 606 (INQEDSVPLISDAVENMDSTLHYIHSDSDLSNNSSFSPD), 698 to 734 (LTAADLVPIFNGFLKDLDEVRIGVLKHLHDFLKLLHI), 799 to 837 (WISYKLVSEMVKKLHAATPPTFGVDLINELVENFGRCPK), and 861 to 898 (QFAVHLMPHLLTLANDRVPNVRVLLAKTLRQTLLEKDY). Residue Ser935 is modified to Phosphoserine.

Serine/threonine-protein phosphatase 4 (PP4) occurs in different assemblies of the catalytic and one or more regulatory subunits. Component of the PP4 complex PPP4C-PPP4R1. Interacts with HDAC3. As to quaternary structure, (Microbial infection) Interacts with merkel polyomavirus small tumor antigen; this interaction bridges small tumor antigen with NEMO to inhibit NF-kappa-B. Widely expressed with high expression in cultured mesangial cells. Isoform 1 and isoform 2 are expressed in renal tissues.

Its function is as follows. Regulatory subunit of serine/threonine-protein phosphatase 4. May play a role in regulation of cell division in renal glomeruli. The PPP4C-PPP4R1 PP4 complex may play a role in dephosphorylation and regulation of HDAC3. Plays a role in the inhibition of TNF-induced NF-kappa-B activation by regulating the dephosphorylation of TRAF2. (Microbial infection) Participates in merkel polyomavirus-mediated inhibition of NF-kappa-B by bridging viral small tumor antigen with NEMO. The protein is Serine/threonine-protein phosphatase 4 regulatory subunit 1 (PPP4R1) of Homo sapiens (Human).